A 471-amino-acid polypeptide reads, in one-letter code: Chromosomal replication initiator protein DnaA (471 aa).

The domain I, interacts with DnaA modulators stretch occupies residues 1–77 (MELNSSFWTL…YTEISDTYGK (77 aa)). The segment at 77 to 130 (KPFEVEFSITGNKINSHIETSTTPDEVLSGSEILQAQLARAQNIQPTQPRSSSD) is domain II. The tract at residues 131-349 (TLNSELTFST…GNLKKVKMFS (219 aa)) is domain III, AAA+ region. Gly-176, Gly-178, Lys-179, and Thr-180 together coordinate ATP. Residues 350–471 (ELQGLPIDHE…EQRIHNITRV (122 aa)) are domain IV, binds dsDNA.

This sequence belongs to the DnaA family. In terms of assembly, oligomerizes as a right-handed, spiral filament on DNA at oriC.

The protein resides in the cytoplasm. Its function is as follows. Plays an essential role in the initiation and regulation of chromosomal replication. ATP-DnaA binds to the origin of replication (oriC) to initiate formation of the DNA replication initiation complex once per cell cycle. Binds the DnaA box (a 9 base pair repeat at the origin) and separates the double-stranded (ds)DNA. Forms a right-handed helical filament on oriC DNA; dsDNA binds to the exterior of the filament while single-stranded (ss)DNA is stabiized in the filament's interior. The ATP-DnaA-oriC complex binds and stabilizes one strand of the AT-rich DNA unwinding element (DUE), permitting loading of DNA polymerase. After initiation quickly degrades to an ADP-DnaA complex that is not apt for DNA replication. Binds acidic phospholipids. This is Chromosomal replication initiator protein DnaA from Bdellovibrio bacteriovorus (strain ATCC 15356 / DSM 50701 / NCIMB 9529 / HD100).